We begin with the raw amino-acid sequence, 210 residues long: Somatotropin (210 aa).

The signal sequence occupies residues 1–22; sequence MGQVFLLMPVLLVSCFLSQGAA. Histidine 38 provides a ligand contact to Zn(2+). Cysteine 71 and cysteine 183 are joined by a disulfide. Residue glutamate 192 coordinates Zn(2+). A disulfide bridge connects residues cysteine 200 and cysteine 208.

This sequence belongs to the somatotropin/prolactin family.

It is found in the secreted. Functionally, growth hormone plays an important role in growth control and is involved in the regulation of several anabolic processes. Implicated as an osmoregulatory substance important for seawater adaptation. This Salmo salar (Atlantic salmon) protein is Somatotropin (gh).